The following is a 272-amino-acid chain: Hematopoietically-expressed homeobox protein hhex (272 aa).

The homeobox DNA-binding region spans 137–196; the sequence is RKGGQVRFSNDQTIELEKKFETQKYLSPPERKRLAKMLQLSERQVKTWFQNRRAKWRRLK. Positions 222-272 are disordered; it reads CLSAEQKSRESSLDDPTSSPTSQGNLDSEVSDDSDQEVDIEGDKGYYNCAH. The span at 250–261 shows a compositional bias: acidic residues; that stretch reads EVSDDSDQEVDI.

As to expression, first expressed in the dorsal endomesoderm of the gastrula stage embryo. The dorsal endomesoderm contributes to forming the embryonic liver, and expression continues in the liver throughout development. Also expressed in precursors of the developing thyroid gland, and beginning at the tailbud stage, expressed in the ventral region of the head. Also transiently expressed in the endothelial layer of developing vascular tissues of the embryo, beginning at the tailbud stages.

The protein resides in the nucleus. Functionally, recognizes the DNA sequence 5'-ATTAA-3'. Transcriptional repressor. Regulates the differentiation of both endothelial and blood cells. Probably plays a role in the proliferation of vascular endothelial cells during blood vessel development. Establishes anterior identity at two levels; acts early to enhance canonical wnt-signaling by repressing expression of tle4, and acts later to inhibit nodal-signaling by directly targeting nodal/nr1 and nodal2/nr2. May play a role in liver development. Induces heart development. The chain is Hematopoietically-expressed homeobox protein hhex from Xenopus laevis (African clawed frog).